A 325-amino-acid chain; its full sequence is GPI-linked NAD(P)(+)--arginine ADP-ribosyltransferase 1 (325 aa).

The N-terminal stretch at 1–22 is a signal peptide; it reads MKIPAMMSLLLVSVGLRDGVQV. Cystine bridges form between Cys-53/Cys-272 and Cys-169/Cys-219. An N-linked (GlcNAc...) asparagine glycan is attached at Asn-65. One can recognise a TR mART core domain in the interval 73-268; sequence KVYADGWAQA…IYLRALGKRS (196 aa). Tyr-117 and Arg-174 together coordinate NAD(+). Residues Arg-174 and Ser-197 contribute to the active site. Position 228 (Ser-228) interacts with NAD(+). Residue Glu-235 is part of the active site. N-linked (GlcNAc...) asparagine glycosylation occurs at Asn-248. Ser-290 carries GPI-anchor amidated serine lipidation. Positions 291–325 are cleaved as a propeptide — removed in mature form; it reads APGSISASCSLLLLLLFLVLSALPENPGLQQLTRC.

It belongs to the Arg-specific ADP-ribosyltransferase family. In terms of tissue distribution, abundantly expressed in cardiac and skeletal muscle. Low levels also found in lung.

It is found in the sarcoplasmic reticulum membrane. It catalyses the reaction L-arginyl-[protein] + NAD(+) = N(omega)-(ADP-D-ribosyl)-L-arginyl-[protein] + nicotinamide + H(+). In terms of biological role, has ADP-ribosyltransferase activity toward GLP1R. This Mus musculus (Mouse) protein is GPI-linked NAD(P)(+)--arginine ADP-ribosyltransferase 1 (Art1).